Consider the following 372-residue polypeptide: D-alanine--D-alanine ligase (372 aa).

Positions lysine 145–glutamate 349 constitute an ATP-grasp domain. ATP is bound at residue aspartate 176–glutamate 231. Aspartate 303, glutamate 316, and asparagine 318 together coordinate Mg(2+).

This sequence belongs to the D-alanine--D-alanine ligase family. It depends on Mg(2+) as a cofactor. The cofactor is Mn(2+).

The protein localises to the cytoplasm. It catalyses the reaction 2 D-alanine + ATP = D-alanyl-D-alanine + ADP + phosphate + H(+). The protein operates within cell wall biogenesis; peptidoglycan biosynthesis. Its function is as follows. Cell wall formation. The protein is D-alanine--D-alanine ligase of Coxiella burnetii (strain Dugway 5J108-111).